The following is a 353-amino-acid chain: Casein kinase II subunit alpha (353 aa).

One can recognise a Protein kinase domain in the interval 39-324 (YQLVRKLGRG…AREAMDHPYF (286 aa)). ATP contacts are provided by residues 45–53 (LGRGKYSEV) and lysine 68. Aspartate 156 serves as the catalytic Proton acceptor. A disordered region spans residues 334–353 (MVSSNSPTPNALQGPISTTE).

This sequence belongs to the protein kinase superfamily. Ser/Thr protein kinase family. CK2 subfamily. In terms of assembly, tetramer of two alpha and two beta chains.

The catalysed reaction is L-seryl-[protein] + ATP = O-phospho-L-seryl-[protein] + ADP + H(+). It carries out the reaction L-threonyl-[protein] + ATP = O-phospho-L-threonyl-[protein] + ADP + H(+). Its function is as follows. Casein kinases are operationally defined by their preferential utilization of acidic proteins such as caseins as substrates. The alpha chain contains the catalytic site. May participate in Wnt signaling. This Spodoptera frugiperda (Fall armyworm) protein is Casein kinase II subunit alpha.